The sequence spans 138 residues: Large ribosomal subunit protein uL14 (138 aa).

It belongs to the universal ribosomal protein uL14 family. In terms of assembly, part of the 50S ribosomal subunit. Forms a cluster with proteins L3 and L24e, part of which may contact the 16S rRNA in 2 intersubunit bridges. Contacts initiation factor aIF-6.

The protein resides in the cytoplasm. Its function is as follows. Binds to 23S rRNA. Forms part of two intersubunit bridges in the 70S ribosome. The protein is Large ribosomal subunit protein uL14 of Saccharolobus solfataricus (strain ATCC 35092 / DSM 1617 / JCM 11322 / P2) (Sulfolobus solfataricus).